The following is a 759-amino-acid chain: 5-methyltetrahydropteroyltriglutamate--homocysteine methyltransferase (759 aa).

Residues 17 to 20 and Lys116 each bind 5-methyltetrahydropteroyltri-L-glutamate; that span reads RELK. L-homocysteine-binding positions include 430–432 and Glu483; that span reads IGS. Residues 430-432 and Glu483 contribute to the L-methionine site; that span reads IGS. Residues 514 to 515 and Trp560 contribute to the 5-methyltetrahydropteroyltri-L-glutamate site; that span reads RC. Asp598 is a binding site for L-homocysteine. L-methionine is bound at residue Asp598. Glu604 is a 5-methyltetrahydropteroyltri-L-glutamate binding site. Zn(2+) is bound by residues His641, Cys643, and Glu665. The Proton donor role is filled by His694. Cys726 contacts Zn(2+).

The protein belongs to the vitamin-B12 independent methionine synthase family. The cofactor is Zn(2+).

It catalyses the reaction 5-methyltetrahydropteroyltri-L-glutamate + L-homocysteine = tetrahydropteroyltri-L-glutamate + L-methionine. It functions in the pathway amino-acid biosynthesis; L-methionine biosynthesis via de novo pathway; L-methionine from L-homocysteine (MetE route): step 1/1. Catalyzes the transfer of a methyl group from 5-methyltetrahydrofolate to homocysteine resulting in methionine formation. This chain is 5-methyltetrahydropteroyltriglutamate--homocysteine methyltransferase, found in Lactococcus lactis subsp. lactis (strain IL1403) (Streptococcus lactis).